The sequence spans 198 residues: Sensory transduction protein RegX3 (198 aa).

The 87-residue stretch at 1–87 folds into the Response regulatory domain; sequence MVTDGPAALA…ELIARIRAVL (87 aa). Aspartate 23 is subject to 4-aspartylphosphate. A DNA-binding region (ompR/PhoB-type) is located at residues 99–198; the sequence is DGVLESGPLR…VRGLGYKLES (100 aa).

Phosphorylated by SenX3.

Functionally, member of the two-component regulatory system SenX3/RegX3. The polypeptide is Sensory transduction protein RegX3 (rgx3) (Mycobacterium leprae (strain TN)).